We begin with the raw amino-acid sequence, 385 residues long: SWI/SNF-related matrix-associated actin-dependent regulator of chromatin subfamily B member 1 (385 aa).

The DNA-binding stretch occupies residues Met-1–Ser-113. Residues Lys-106, Lys-108, and Lys-124 each participate in a glycyl lysine isopeptide (Lys-Gly) (interchain with G-Cter in SUMO2) cross-link. Residue Ser-129 is modified to Phosphoserine. A Glycyl lysine isopeptide (Lys-Gly) (interchain with G-Cter in SUMO2) cross-link involves residue Lys-161. The tract at residues Pro-183–Gln-243 is HIV-1 integrase-binding. 2 tandem repeats follow at residues Leu-186 to Ile-245 and Asp-259 to Leu-319. Residues Leu-186–Ile-245 form an MYC-binding region. Residues Leu-186–Leu-319 form a 2 X approximate tandem repeats region. Residues Gly-304–Gln-318 are interaction with PPP1R15A.

This sequence belongs to the SNF5 family. In terms of assembly, component of the multiprotein chromatin-remodeling complexes SWI/SNF: SWI/SNF-A (BAF), SWI/SNF-B (PBAF) and related complexes. The canonical complex contains a catalytic subunit (either SMARCA4/BRG1/BAF190A or SMARCA2/BRM/BAF190B) and at least SMARCE1, ACTL6A/BAF53, SMARCC1/BAF155, SMARCC2/BAF170, and SMARCB1/SNF5/BAF47. Other subunits specific to each of the complexes may also be present permitting several possible combinations developmentally and tissue specific. Component of the BAF complex, which includes at least actin (ACTB), ARID1A/BAF250A, ARID1B/BAF250B, SMARCA2/BRM, SMARCA4/BRG1/BAF190A, ACTL6A/BAF53, ACTL6B/BAF53B, SMARCE1/BAF57 SMARCC1/BAF155, SMARCC2/BAF170, SMARCB1/SNF5/INI1, and one or more SMARCD1/BAF60A, SMARCD2/BAF60B, or SMARCD3/BAF60C. In muscle cells, the BAF complex also contains DPF3. Component of neural progenitors-specific chromatin remodeling complex (npBAF complex) composed of at least, ARID1A/BAF250A or ARID1B/BAF250B, SMARCD1/BAF60A, SMARCD3/BAF60C, SMARCA2/BRM/BAF190B, SMARCA4/BRG1/BAF190A, SMARCB1/BAF47, SMARCC1/BAF155, SMARCE1/BAF57, SMARCC2/BAF170, PHF10/BAF45A, ACTL6A/BAF53A and actin. Component of neuron-specific chromatin remodeling complex (nBAF complex) composed of at least, ARID1A/BAF250A or ARID1B/BAF250B, SMARCD1/BAF60A, SMARCD3/BAF60C, SMARCA2/BRM/BAF190B, SMARCA4/BRG1/BAF190A, SMARCB1/BAF47, SMARCC1/BAF155, SMARCE1/BAF57, SMARCC2/BAF170, DPF1/BAF45B, DPF3/BAF45C, ACTL6B/BAF53B and actin. Component of the SWI/SNF-B (PBAF) chromatin remodeling complex, at least composed of SMARCA4/BRG1, SMARCB1/BAF47/SNF5, ACTL6A/BAF53A or ACTL6B/BAF53B, SMARCE1/BAF57, SMARCD1/BAF60A, SMARCD2/BAF60B, perhaps SMARCD3/BAF60C, SMARCC1/BAF155, SMARCC2/BAF170, PBRM1/BAF180, ARID2/BAF200 and actin. Binds to double-stranded DNA. Interacts with CEBPB (when not methylated). Interacts with PIH1D1. Interacts with MYK and MAEL. Interacts with PPP1R15A. Interacts with DPF2. Interacts with YWHAZ. Interacts with ERCC6. Interacts with FOS, FOSB isoform 1 and 2, FOSL1 and FOSL2. (Microbial infection) Binds tightly to the human immunodeficiency virus-type 1 (HIV-1) integrase in vitro and stimulates its DNA-joining activity. Interacts with human papillomavirus 18 E1 protein to stimulate its viral replication. Interacts with Epstein-Barr virus protein EBNA-2.

The protein resides in the nucleus. Core component of the BAF (hSWI/SNF) complex. This ATP-dependent chromatin-remodeling complex plays important roles in cell proliferation and differentiation, in cellular antiviral activities and inhibition of tumor formation. The BAF complex is able to create a stable, altered form of chromatin that constrains fewer negative supercoils than normal. This change in supercoiling would be due to the conversion of up to one-half of the nucleosomes on polynucleosomal arrays into asymmetric structures, termed altosomes, each composed of 2 histones octamers. Stimulates in vitro the remodeling activity of SMARCA4/BRG1/BAF190A. Involved in activation of CSF1 promoter. Belongs to the neural progenitors-specific chromatin remodeling complex (npBAF complex) and the neuron-specific chromatin remodeling complex (nBAF complex). During neural development a switch from a stem/progenitor to a postmitotic chromatin remodeling mechanism occurs as neurons exit the cell cycle and become committed to their adult state. The transition from proliferating neural stem/progenitor cells to postmitotic neurons requires a switch in subunit composition of the npBAF and nBAF complexes. As neural progenitors exit mitosis and differentiate into neurons, npBAF complexes which contain ACTL6A/BAF53A and PHF10/BAF45A, are exchanged for homologous alternative ACTL6B/BAF53B and DPF1/BAF45B or DPF3/BAF45C subunits in neuron-specific complexes (nBAF). The npBAF complex is essential for the self-renewal/proliferative capacity of the multipotent neural stem cells. The nBAF complex along with CREST plays a role regulating the activity of genes essential for dendrite growth. Plays a key role in cell-cycle control and causes cell cycle arrest in G0/G1. This chain is SWI/SNF-related matrix-associated actin-dependent regulator of chromatin subfamily B member 1 (SMARCB1), found in Homo sapiens (Human).